The sequence spans 606 residues: Endonuclease 8-like 3 (606 aa).

Val2 acts as the Schiff-base intermediate with DNA; via amino nitrogen in catalysis. The interval Ala31–Ser51 is disordered. Residues Asn194 and Arg273 each coordinate DNA. The FPG-type zinc finger occupies Lys249–Lys283. The RanBP2-type zinc-finger motif lies at Ser319 to Ala348. A Phosphoserine modification is found at Ser451. Zn(2+) contacts are provided by Cys508, His511, Cys534, Cys542, Cys555, His557, Cys580, and Cys588. GRF-type zinc fingers lie at residues Cys508–Ser551 and Cys555–Gly597.

The protein belongs to the FPG family.

Its subcellular location is the nucleus. It localises to the chromosome. It carries out the reaction 2'-deoxyribonucleotide-(2'-deoxyribose 5'-phosphate)-2'-deoxyribonucleotide-DNA = a 3'-end 2'-deoxyribonucleotide-(2,3-dehydro-2,3-deoxyribose 5'-phosphate)-DNA + a 5'-end 5'-phospho-2'-deoxyribonucleoside-DNA + H(+). DNA glycosylase which prefers single-stranded DNA (ssDNA), or partially ssDNA structures such as bubble and fork structures, to double-stranded DNA (dsDNA). Mediates interstrand cross-link repair in response to replication stress: acts by mediating DNA glycosylase activity, cleaving one of the two N-glycosyl bonds comprising the interstrand cross-link, which avoids the formation of a double-strand break but generates an abasic site that is bypassed by translesion synthesis polymerases. In vitro, displays strong glycosylase activity towards the hydantoin lesions spiroiminodihydantoin (Sp) and guanidinohydantoin (Gh) in both ssDNA and dsDNA; also recognizes FapyA, FapyG, 5-OHU, 5-OHC, 5-OHMH, Tg and 8-oxoA lesions in ssDNA. No activity on 8-oxoG detected. Also shows weak DNA-(apurinic or apyrimidinic site) lyase activity. In vivo, appears to be the primary enzyme involved in removing Sp and Gh from ssDNA in neonatal tissues. This Bos taurus (Bovine) protein is Endonuclease 8-like 3 (NEIL3).